The following is a 130-amino-acid chain: Small ribosomal subunit protein uS8 (130 aa).

Belongs to the universal ribosomal protein uS8 family. Part of the 30S ribosomal subunit. Contacts proteins S5 and S12.

One of the primary rRNA binding proteins, it binds directly to 16S rRNA central domain where it helps coordinate assembly of the platform of the 30S subunit. This chain is Small ribosomal subunit protein uS8, found in Opitutus terrae (strain DSM 11246 / JCM 15787 / PB90-1).